Consider the following 526-residue polypeptide: Bifunctional purine biosynthesis protein PurH (526 aa).

Residues 1 to 148 (MSLNNIIKNA…KNYKDVIVIV (148 aa)) enclose the MGS-like domain.

Belongs to the PurH family.

It carries out the reaction (6R)-10-formyltetrahydrofolate + 5-amino-1-(5-phospho-beta-D-ribosyl)imidazole-4-carboxamide = 5-formamido-1-(5-phospho-D-ribosyl)imidazole-4-carboxamide + (6S)-5,6,7,8-tetrahydrofolate. It catalyses the reaction IMP + H2O = 5-formamido-1-(5-phospho-D-ribosyl)imidazole-4-carboxamide. It participates in purine metabolism; IMP biosynthesis via de novo pathway; 5-formamido-1-(5-phospho-D-ribosyl)imidazole-4-carboxamide from 5-amino-1-(5-phospho-D-ribosyl)imidazole-4-carboxamide (10-formyl THF route): step 1/1. It functions in the pathway purine metabolism; IMP biosynthesis via de novo pathway; IMP from 5-formamido-1-(5-phospho-D-ribosyl)imidazole-4-carboxamide: step 1/1. The sequence is that of Bifunctional purine biosynthesis protein PurH from Buchnera aphidicola subsp. Schizaphis graminum (strain Sg).